The chain runs to 142 residues: uncharacterized protein (142 aa).

An N-acetyltransferase domain is found at 1 to 120 (MADKFDANDE…TILKWEKNMD (120 aa)).

It belongs to the acetyltransferase family.

This is an uncharacterized protein from Streptococcus pyogenes serotype M1.